The following is a 394-amino-acid chain: 8-amino-7-oxononanoate synthase (394 aa).

Arginine 18 is a substrate binding site. 105 to 106 (GY) provides a ligand contact to pyridoxal 5'-phosphate. Histidine 130 lines the substrate pocket. 3 residues coordinate pyridoxal 5'-phosphate: serine 175, histidine 203, and threonine 232. Lysine 235 carries the N6-(pyridoxal phosphate)lysine modification. Threonine 349 serves as a coordination point for substrate.

This sequence belongs to the class-II pyridoxal-phosphate-dependent aminotransferase family. BioF subfamily. As to quaternary structure, homodimer. It depends on pyridoxal 5'-phosphate as a cofactor.

The catalysed reaction is 6-carboxyhexanoyl-[ACP] + L-alanine + H(+) = (8S)-8-amino-7-oxononanoate + holo-[ACP] + CO2. Its pathway is cofactor biosynthesis; biotin biosynthesis. Its function is as follows. Catalyzes the decarboxylative condensation of pimeloyl-[acyl-carrier protein] and L-alanine to produce 8-amino-7-oxononanoate (AON), [acyl-carrier protein], and carbon dioxide. In Marinobacter nauticus (strain ATCC 700491 / DSM 11845 / VT8) (Marinobacter aquaeolei), this protein is 8-amino-7-oxononanoate synthase.